A 313-amino-acid polypeptide reads, in one-letter code: tRNA dimethylallyltransferase (313 aa).

10–17 (GPTAVGKS) lines the ATP pocket. Residue 12 to 17 (TAVGKS) coordinates substrate. Positions 35-38 (DSTQ) are interaction with substrate tRNA.

This sequence belongs to the IPP transferase family. Monomer. It depends on Mg(2+) as a cofactor.

The catalysed reaction is adenosine(37) in tRNA + dimethylallyl diphosphate = N(6)-dimethylallyladenosine(37) in tRNA + diphosphate. Catalyzes the transfer of a dimethylallyl group onto the adenine at position 37 in tRNAs that read codons beginning with uridine, leading to the formation of N6-(dimethylallyl)adenosine (i(6)A). This is tRNA dimethylallyltransferase from Oceanobacillus iheyensis (strain DSM 14371 / CIP 107618 / JCM 11309 / KCTC 3954 / HTE831).